The chain runs to 298 residues: MNHIQEAFLNTLKVERNFSEHTLKSYQDDLIQFNQFLEQEHLQLNTFEYRDARNYLSYLYSNHLKRTSVSRKISTLRTFYEYWMTLDENIINPFVQLVHPKKEKYLPQFFYEEEMEALFKTVEEDTSKSLRDRVILELLYATGIRVSELVNIKKQDIDFYANGVTVFGKGSKERFVPFGAYCRQSIENYLEHFKPIQSCNHDFLIVNMKGEAITERGVRYVLNDIVKRTAGVSEIHPHKLRHTFATHLLNQGADLRTVQSLLGHVNLSTTGKYTHVSNQQLRKVYLNAHPRAKKENET.

The Core-binding (CB) domain maps to Met1–Met84. The Tyr recombinase domain maps to Tyr105 to Leu286. Catalysis depends on residues Arg145, Lys169, His238, Arg241, and His264. The active-site O-(3'-phospho-DNA)-tyrosine intermediate is Tyr273.

It belongs to the 'phage' integrase family. XerC subfamily. Forms a cyclic heterotetrameric complex composed of two molecules of XerC and two molecules of XerD.

The protein localises to the cytoplasm. In terms of biological role, site-specific tyrosine recombinase, which acts by catalyzing the cutting and rejoining of the recombining DNA molecules. The XerC-XerD complex is essential to convert dimers of the bacterial chromosome into monomers to permit their segregation at cell division. It also contributes to the segregational stability of plasmids. This Staphylococcus aureus (strain bovine RF122 / ET3-1) protein is Tyrosine recombinase XerC.